We begin with the raw amino-acid sequence, 360 residues long: Alanine racemase (360 aa).

Lys-36 acts as the Proton acceptor; specific for D-alanine in catalysis. Lys-36 is modified (N6-(pyridoxal phosphate)lysine). Residue Arg-132 participates in substrate binding. The active-site Proton acceptor; specific for L-alanine is the Tyr-256. Met-304 lines the substrate pocket.

The protein belongs to the alanine racemase family. It depends on pyridoxal 5'-phosphate as a cofactor.

The enzyme catalyses L-alanine = D-alanine. The protein operates within amino-acid biosynthesis; D-alanine biosynthesis; D-alanine from L-alanine: step 1/1. Catalyzes the interconversion of L-alanine and D-alanine. May also act on other amino acids. The protein is Alanine racemase (alr) of Pasteurella multocida (strain Pm70).